The sequence spans 331 residues: MTHIPKTPADTETLLSEVQGWKHRHVLDLDNFSREELDMVMQTAGVMLDILSRPVKKVPALKGKTIATLFYEPSTRTRSSFELAAKSLSADVLNLNVSQSSISKGESLLDTLDTLESLGADMVVMRHPLSGAPYLAANNCHANIINAGDGWHAHPSQALLDIFTILRHKSSLEGLKITLIGDIKHSRVAHSNIWGLSKMGAKITLCAPYTLLPEGLNTNSKIFPEVTLETDIKQAVSGADVVMGLRLQRERQQSGLLPGIREYARYFQLNEEILKLAKSNALVMHPGPVNEDIELSQSVVHGEQSVIKEQVKNGVAVRMALFYLCSGSKEI.

Carbamoyl phosphate contacts are provided by R76 and T77. An L-aspartate-binding site is contributed by K104. Residues R126, H154, and Q157 each contribute to the carbamoyl phosphate site. Residues R187 and R246 each coordinate L-aspartate. Carbamoyl phosphate is bound by residues G287 and P288.

This sequence belongs to the aspartate/ornithine carbamoyltransferase superfamily. ATCase family. In terms of assembly, heterododecamer (2C3:3R2) of six catalytic PyrB chains organized as two trimers (C3), and six regulatory PyrI chains organized as three dimers (R2).

It carries out the reaction carbamoyl phosphate + L-aspartate = N-carbamoyl-L-aspartate + phosphate + H(+). It functions in the pathway pyrimidine metabolism; UMP biosynthesis via de novo pathway; (S)-dihydroorotate from bicarbonate: step 2/3. Catalyzes the condensation of carbamoyl phosphate and aspartate to form carbamoyl aspartate and inorganic phosphate, the committed step in the de novo pyrimidine nucleotide biosynthesis pathway. This chain is Aspartate carbamoyltransferase catalytic subunit, found in Dehalococcoides mccartyi (strain ATCC BAA-2100 / JCM 16839 / KCTC 5957 / BAV1).